A 338-amino-acid polypeptide reads, in one-letter code: MWEANPEMFHKAEELFSKTTNNEVDDMDTSDTQWGWFYLAECGKWHMFQPDTNSQCSVSSEDIEKSFKTNPCGSISFTTSKFSYKIDFAEMKQMNLTTGKQRLIKRAPFSISAFSYICENEAIPMPPHWENVNTQVPYQLIPLHNQTHEYNEVANLFGKTMDRNRIKRIQRIQNLDLWEFFCRKKAQLKKKRGVPQINEQMLFHGTSSEFVEAICIHNFDWRINGIHGAVFGKGTYFARDAAYSSRFCKDDIKHGNTFQIHGVSLQQRHLFRTYKSMFLARVLIGDYINGDSKYMRPPSKDGSYVNLYDSCVDDTWNPKIFVVFDANQIYPEYLIDFH.

Glu13 carries the ADP-ribosyl glutamic acid modification. Lys18 bears the N6-(ADP-ribosyl)lysine mark. Positions 22–106 constitute a WWE domain; it reads NEVDDMDTSD…TTGKQRLIKR (85 aa). Cys56 and Cys72 each carry ADP-ribosylcysteine. Position 87 is an ADP-ribosyl aspartic acid (Asp87). The 216-residue stretch at 123-338 folds into the PARP catalytic domain; the sequence is IPMPPHWENV…IYPEYLIDFH (216 aa).

It belongs to the ARTD/PARP family. Interacts with PARP12; this interaction plays a role in zika virus suppression. Post-translationally, auto-mono-ADP-ribosylated.

The protein resides in the nucleus. It localises to the nuclear pore complex. It catalyses the reaction L-aspartyl-[protein] + NAD(+) = 4-O-(ADP-D-ribosyl)-L-aspartyl-[protein] + nicotinamide. The enzyme catalyses L-cysteinyl-[protein] + NAD(+) = S-(ADP-D-ribosyl)-L-cysteinyl-[protein] + nicotinamide + H(+). The catalysed reaction is L-glutamyl-[protein] + NAD(+) = 5-O-(ADP-D-ribosyl)-L-glutamyl-[protein] + nicotinamide. It carries out the reaction L-lysyl-[protein] + NAD(+) = N(6)-(ADP-D-ribosyl)-L-lysyl-[protein] + nicotinamide + H(+). Mono-ADP-ribosyltransferase that mediates mono-ADP-ribosylation of target proteins. Plays a role in nuclear envelope stability and nuclear remodeling during spermiogenesis. Inhibits the type I interferon activated signaling pathway. Mechanistically, mono-ADP-ribosylates beta-TrCP/BTRC to promote IFNAR1 ubiquitination and protect BTRC from ubiquitin-proteasome degradation. Additionally, acts as an antiviral factor by cooperating with PARP12 to suppress Zika virus replication, independent of IFNAR1 regulation or intrinsic PARP enzymatic activity. Instead, facilitates the degradation of viral NS1 and NS3 proteins, potentially disrupting viral replication. The sequence is that of Protein mono-ADP-ribosyltransferase PARP11 from Homo sapiens (Human).